The chain runs to 307 residues: Thymidylate synthase (307 aa).

The tract at residues 1–22 (MLVEGSELQSGAQQPRTEAPQH) is disordered. Positions 7-16 (ELQSGAQQPR) are enriched in polar residues. Arg-44 serves as a coordination point for dUMP. The residue at position 108 (Ser-108) is a Phosphoserine. Residues 169–170 (RR), 189–190 (CH), 209–212 (RSGD), Asn-220, and 250–252 (HIY) each bind dUMP. Cys-189 functions as the Nucleophile in the catalytic mechanism. Asp-212 is a binding site for (6R)-5,10-methylene-5,6,7,8-tetrahydrofolate. Glycyl lysine isopeptide (Lys-Gly) (interchain with G-Cter in SUMO2) cross-links involve residues Lys-286 and Lys-302. A (6R)-5,10-methylene-5,6,7,8-tetrahydrofolate-binding site is contributed by Ala-306.

It belongs to the thymidylate synthase family. As to quaternary structure, homodimer.

It is found in the nucleus. The protein resides in the cytoplasm. Its subcellular location is the mitochondrion. It localises to the mitochondrion matrix. The protein localises to the mitochondrion inner membrane. The enzyme catalyses dUMP + (6R)-5,10-methylene-5,6,7,8-tetrahydrofolate = 7,8-dihydrofolate + dTMP. It participates in pyrimidine metabolism; dTTP biosynthesis. Its function is as follows. Catalyzes the reductive methylation of 2'-deoxyuridine 5'-monophosphate (dUMP) to thymidine 5'-monophosphate (dTMP), using the cosubstrate, 5,10- methylenetetrahydrofolate (CH2H4folate) as a 1-carbon donor and reductant and contributes to the de novo mitochondrial thymidylate biosynthesis pathway. The polypeptide is Thymidylate synthase (Tyms) (Rattus norvegicus (Rat)).